We begin with the raw amino-acid sequence, 219 residues long: Beta-crystallin B2 (219 aa).

Alanine 2 carries the post-translational modification N-acetylalanine. The N-terminal arm stretch occupies residues 2–16 (ASEHQMPASKQQPAS). Beta/gamma crystallin 'Greek key' domains follow at residues 17 to 56 (PNIA…LVHS) and 57 to 101 (GPWV…RPIK). The segment at 102–120 (VVRAPRQPLPTRQTKDSQE) is connecting peptide. 2 consecutive Beta/gamma crystallin 'Greek key' domains span residues 121–162 (HKIV…RVQS) and 163–205 (GTWV…RRIR). Residues 207–219 (MQWHQRGAYHPSN) form a C-terminal arm region.

The protein belongs to the beta/gamma-crystallin family. Homo/heterodimer, or complexes of higher-order. The structure of beta-crystallin oligomers seems to be stabilized through interactions between the N-terminal arms.

In terms of biological role, crystallins are the dominant structural components of the vertebrate eye lens. The polypeptide is Beta-crystallin B2 (CRYBB2) (Gallus gallus (Chicken)).